The following is a 319-amino-acid chain: Ferrochelatase (319 aa).

Residues His-193 and Glu-274 each coordinate Fe cation.

Belongs to the ferrochelatase family.

It localises to the cytoplasm. It catalyses the reaction heme b + 2 H(+) = protoporphyrin IX + Fe(2+). The protein operates within porphyrin-containing compound metabolism; protoheme biosynthesis; protoheme from protoporphyrin-IX: step 1/1. Its function is as follows. Catalyzes the ferrous insertion into protoporphyrin IX. The polypeptide is Ferrochelatase (Erwinia tasmaniensis (strain DSM 17950 / CFBP 7177 / CIP 109463 / NCPPB 4357 / Et1/99)).